The sequence spans 114 residues: Phosphoribosyl-AMP cyclohydrolase (114 aa).

D76 is a Mg(2+) binding site. Zn(2+) is bound at residue C77. Mg(2+) is bound by residues D78 and D80. Zn(2+)-binding residues include C93 and C100.

This sequence belongs to the PRA-CH family. As to quaternary structure, homodimer. Mg(2+) is required as a cofactor. Requires Zn(2+) as cofactor.

The protein localises to the cytoplasm. It catalyses the reaction 1-(5-phospho-beta-D-ribosyl)-5'-AMP + H2O = 1-(5-phospho-beta-D-ribosyl)-5-[(5-phospho-beta-D-ribosylamino)methylideneamino]imidazole-4-carboxamide. The protein operates within amino-acid biosynthesis; L-histidine biosynthesis; L-histidine from 5-phospho-alpha-D-ribose 1-diphosphate: step 3/9. Catalyzes the hydrolysis of the adenine ring of phosphoribosyl-AMP. In Streptococcus sanguinis (strain SK36), this protein is Phosphoribosyl-AMP cyclohydrolase.